The primary structure comprises 188 residues: GMP synthase [glutamine-hydrolyzing] subunit A (188 aa).

In terms of domain architecture, Glutamine amidotransferase type-1 spans 2–188 (KIAVIYFGGQ…FKNFIEACKK (187 aa)). C79 acts as the Nucleophile in catalysis. Active-site residues include H166 and E168.

As to quaternary structure, heterodimer composed of a glutamine amidotransferase subunit (A) and a GMP-binding subunit (B).

The enzyme catalyses XMP + L-glutamine + ATP + H2O = GMP + L-glutamate + AMP + diphosphate + 2 H(+). It functions in the pathway purine metabolism; GMP biosynthesis; GMP from XMP (L-Gln route): step 1/1. Catalyzes the synthesis of GMP from XMP. The protein is GMP synthase [glutamine-hydrolyzing] subunit A of Sulfurisphaera tokodaii (strain DSM 16993 / JCM 10545 / NBRC 100140 / 7) (Sulfolobus tokodaii).